Consider the following 104-residue polypeptide: uncharacterized protein (104 aa).

Helical transmembrane passes span 26-46 and 70-90; these read IGTGIIGVIGGILVVKGFTFF and GLLGGIIGIATGFSITIIIAI.

The protein localises to the membrane. This is an uncharacterized protein from Acanthamoeba polyphaga mimivirus (APMV).